Reading from the N-terminus, the 509-residue chain is Light-independent protochlorophyllide reductase subunit B (509 aa).

D36 is a [4Fe-4S] cluster binding site. D298 acts as the Proton donor in catalysis. Residue 433–434 (GM) coordinates substrate.

Belongs to the ChlB/BchB/BchZ family. Protochlorophyllide reductase is composed of three subunits; ChlL, ChlN and ChlB. Forms a heterotetramer of two ChlB and two ChlN subunits. The cofactor is [4Fe-4S] cluster.

The protein resides in the plastid. It localises to the chloroplast. It catalyses the reaction chlorophyllide a + oxidized 2[4Fe-4S]-[ferredoxin] + 2 ADP + 2 phosphate = protochlorophyllide a + reduced 2[4Fe-4S]-[ferredoxin] + 2 ATP + 2 H2O. It functions in the pathway porphyrin-containing compound metabolism; chlorophyll biosynthesis (light-independent). Functionally, component of the dark-operative protochlorophyllide reductase (DPOR) that uses Mg-ATP and reduced ferredoxin to reduce ring D of protochlorophyllide (Pchlide) to form chlorophyllide a (Chlide). This reaction is light-independent. The NB-protein (ChlN-ChlB) is the catalytic component of the complex. The chain is Light-independent protochlorophyllide reductase subunit B from Ephedra altissima (High-climbing jointfir).